Here is a 163-residue protein sequence, read N- to C-terminus: Fatty acid-binding protein homolog (163 aa).

The first 23 residues, 1 to 23 (MRCLVALILTVLIVTPEVEAKTL), serve as a signal peptide directing secretion.

It belongs to the calycin superfamily. Fatty-acid binding protein (FABP) family. In terms of tissue distribution, abundant in the fluid surrounding the developing embryo of Ascaris suum.

Its function is as follows. May play a role in sequestering potentially toxic fatty acids and their peroxidation products, or it may be involved in the maintenance of the impermeable lipid layer of the eggshell. This is Fatty acid-binding protein homolog from Ascaris suum (Pig roundworm).